Reading from the N-terminus, the 145-residue chain is Ribonuclease VapC48 (145 aa).

Residues aspartate 6 and aspartate 109 each coordinate Mg(2+). Positions 15 to 141 (HRASPFHDKA…RKFEGIRIRD (127 aa)) constitute a PINc domain.

It belongs to the PINc/VapC protein family. Mg(2+) serves as cofactor.

Its function is as follows. Toxic component of a type II toxin-antitoxin (TA) system. An RNase. Its cognate antitoxin is VapB48. In Mycobacterium tuberculosis (strain CDC 1551 / Oshkosh), this protein is Ribonuclease VapC48.